Here is a 166-residue protein sequence, read N- to C-terminus: 2-amino-4-hydroxy-6-hydroxymethyldihydropteridine pyrophosphokinase (166 aa).

It belongs to the HPPK family.

It catalyses the reaction 6-hydroxymethyl-7,8-dihydropterin + ATP = (7,8-dihydropterin-6-yl)methyl diphosphate + AMP + H(+). Its pathway is cofactor biosynthesis; tetrahydrofolate biosynthesis; 2-amino-4-hydroxy-6-hydroxymethyl-7,8-dihydropteridine diphosphate from 7,8-dihydroneopterin triphosphate: step 4/4. In terms of biological role, catalyzes the transfer of pyrophosphate from adenosine triphosphate (ATP) to 6-hydroxymethyl-7,8-dihydropterin, an enzymatic step in folate biosynthesis pathway. This chain is 2-amino-4-hydroxy-6-hydroxymethyldihydropteridine pyrophosphokinase (folK), found in Streptococcus pyogenes serotype M1.